We begin with the raw amino-acid sequence, 233 residues long: tRNA (guanine-N(1)-)-methyltransferase (233 aa).

S-adenosyl-L-methionine-binding positions include Gly-110 and 130–135; that span reads IGDYVM.

It belongs to the RNA methyltransferase TrmD family. Homodimer.

It is found in the cytoplasm. The enzyme catalyses guanosine(37) in tRNA + S-adenosyl-L-methionine = N(1)-methylguanosine(37) in tRNA + S-adenosyl-L-homocysteine + H(+). Its function is as follows. Specifically methylates guanosine-37 in various tRNAs. This is tRNA (guanine-N(1)-)-methyltransferase from Finegoldia magna (strain ATCC 29328 / DSM 20472 / WAL 2508) (Peptostreptococcus magnus).